We begin with the raw amino-acid sequence, 257 residues long: Zinc import ATP-binding protein ZnuC (257 aa).

In terms of domain architecture, ABC transporter spans 6-221 (IRLEQVGVSF…PAFVELFGQN (216 aa)). Residue 38–45 (GPNGAGKT) coordinates ATP.

This sequence belongs to the ABC transporter superfamily. Zinc importer (TC 3.A.1.15.5) family. As to quaternary structure, the complex is composed of two ATP-binding proteins (ZnuC), two transmembrane proteins (ZnuB) and a solute-binding protein (ZnuA).

The protein localises to the cell inner membrane. It carries out the reaction Zn(2+)(out) + ATP(in) + H2O(in) = Zn(2+)(in) + ADP(in) + phosphate(in) + H(+)(in). In terms of biological role, part of the ABC transporter complex ZnuABC involved in zinc import. Responsible for energy coupling to the transport system. The polypeptide is Zinc import ATP-binding protein ZnuC (Pseudomonas entomophila (strain L48)).